Here is a 196-residue protein sequence, read N- to C-terminus: Peptidoglycan recognition protein (196 aa).

The N-terminal stretch at 1-23 (MARLHSAVVLALALSSLLTEIAA) is a signal peptide. 2 disulfides stabilise this stretch: Cys25–Cys147 and Cys61–Cys67. In terms of domain architecture, N-acetylmuramoyl-L-alanine amidase spans 46–173 (RPVSLVIVQH…RQLIASESPG (128 aa)).

It belongs to the N-acetylmuramoyl-L-alanine amidase 2 family. In terms of assembly, monomer. Constitutively expressed in fat body, epithelial cells and hemocytes. Not detected in Malpighian tubules, silk gland or midgut.

Its function is as follows. Binds specifically to peptidoglycan and triggers the propenoloxidase cascade which is an important insect defense mechanism. This Bombyx mori (Silk moth) protein is Peptidoglycan recognition protein.